Consider the following 122-residue polypeptide: Histone H2B type 2-K1 (122 aa).

A disordered region spans residues 1–30; sequence MSAEYGQRQQPGGRGGRSSGNKKSKKRCRR. Residues 20–30 are compositionally biased toward basic residues; the sequence is GNKKSKKRCRR. At K31 the chain carries N6-(2-hydroxyisobutyryl)lysine; alternate. At K31 the chain carries N6-(beta-hydroxybutyryl)lysine; alternate. K31 is subject to N6-crotonyllysine; alternate. Position 31 is an N6-glutaryllysine; alternate (K31). Position 31 is an N6-succinyllysine; alternate (K31). A Glycyl lysine isopeptide (Lys-Gly) (interchain with G-Cter in ubiquitin); alternate cross-link involves residue K31. S33 bears the Phosphoserine mark. N6-(2-hydroxyisobutyryl)lysine; alternate is present on residues K40, K43, and K54. N6-glutaryllysine; alternate is present on residues K40 and K43. An N6-lactoyllysine; alternate modification is found at K40. At K43 the chain carries N6-methyllysine. Position 43 is an N6-methyllysine; alternate (K43). Residue K54 is modified to N6,N6-dimethyllysine. N6,N6-dimethyllysine; alternate is present on K54. R76 carries the post-translational modification Dimethylated arginine. A Phosphoserine modification is found at S81. R83 and R89 each carry omega-N-methylarginine. K105 carries the N6-(2-hydroxyisobutyryl)lysine; alternate modification. At K105 the chain carries N6-glutaryllysine; alternate. At K105 the chain carries N6-lactoyllysine; alternate. K105 is subject to N6-methyllysine. The residue at position 105 (K105) is an N6-methyllysine; alternate. The O-linked (GlcNAc) serine glycan is linked to S109. Phosphothreonine is present on T112. An N6-(2-hydroxyisobutyryl)lysine; alternate mark is found at K113 and K117. Residues K113 and K117 each carry the N6-(beta-hydroxybutyryl)lysine; alternate modification. An N6-glutaryllysine; alternate mark is found at K113 and K117. Residues K113 and K117 each carry the N6-succinyllysine; alternate modification. K113 bears the N6-lactoyllysine; alternate mark. K113 carries the post-translational modification N6-malonyllysine; alternate. N6-methylated lysine; alternate is present on K113. A Glycyl lysine isopeptide (Lys-Gly) (interchain with G-Cter in ubiquitin); alternate cross-link involves residue K117.

It belongs to the histone H2B family. As to quaternary structure, the nucleosome is a histone octamer containing two molecules each of H2A, H2B, H3 and H4 assembled in one H3-H4 heterotetramer and two H2A-H2B heterodimers. The octamer wraps approximately 147 bp of DNA.

Its subcellular location is the chromosome. It is found in the nucleus. Functionally, core component of nucleosome. Nucleosomes wrap and compact DNA into chromatin, limiting DNA accessibility to the cellular machineries which require DNA as a template. Histones thereby play a central role in transcription regulation, DNA repair, DNA replication and chromosomal stability. DNA accessibility is regulated via a complex set of post-translational modifications of histones, also called histone code, and nucleosome remodeling. This chain is Histone H2B type 2-K1, found in Homo sapiens (Human).